The chain runs to 139 residues: Large ribosomal subunit protein eL32 (139 aa).

This sequence belongs to the eukaryotic ribosomal protein eL32 family.

The chain is Large ribosomal subunit protein eL32 (RPL32) from Encephalitozoon cuniculi (strain GB-M1) (Microsporidian parasite).